A 212-amino-acid polypeptide reads, in one-letter code: ATP phosphoribosyltransferase (212 aa).

It belongs to the ATP phosphoribosyltransferase family. Short subfamily. Heteromultimer composed of HisG and HisZ subunits.

It is found in the cytoplasm. It catalyses the reaction 1-(5-phospho-beta-D-ribosyl)-ATP + diphosphate = 5-phospho-alpha-D-ribose 1-diphosphate + ATP. It participates in amino-acid biosynthesis; L-histidine biosynthesis; L-histidine from 5-phospho-alpha-D-ribose 1-diphosphate: step 1/9. Functionally, catalyzes the condensation of ATP and 5-phosphoribose 1-diphosphate to form N'-(5'-phosphoribosyl)-ATP (PR-ATP). Has a crucial role in the pathway because the rate of histidine biosynthesis seems to be controlled primarily by regulation of HisG enzymatic activity. The protein is ATP phosphoribosyltransferase of Clostridium botulinum (strain ATCC 19397 / Type A).